The chain runs to 55 residues: ATP synthase protein 8 (55 aa).

The chain crosses the membrane as a helical span at residues 6-26 (PHPWFAILVFSWIFFLVILPK).

This sequence belongs to the ATPase protein 8 family. As to quaternary structure, F-type ATPases have 2 components, CF(1) - the catalytic core - and CF(0) - the membrane proton channel.

The protein resides in the mitochondrion membrane. In terms of biological role, mitochondrial membrane ATP synthase (F(1)F(0) ATP synthase or Complex V) produces ATP from ADP in the presence of a proton gradient across the membrane which is generated by electron transport complexes of the respiratory chain. F-type ATPases consist of two structural domains, F(1) - containing the extramembraneous catalytic core and F(0) - containing the membrane proton channel, linked together by a central stalk and a peripheral stalk. During catalysis, ATP synthesis in the catalytic domain of F(1) is coupled via a rotary mechanism of the central stalk subunits to proton translocation. Part of the complex F(0) domain. Minor subunit located with subunit a in the membrane. The protein is ATP synthase protein 8 (MT-ATP8) of Squalus acanthias (Spiny dogfish).